A 401-amino-acid polypeptide reads, in one-letter code: Probable tRNA sulfurtransferase (401 aa).

A THUMP domain is found at 60 to 165 (EPIIDKLKNV…QEGTYITCHD (106 aa)). ATP-binding positions include 183 to 184 (ML), 208 to 209 (HF), Arg-265, Gly-287, and Gln-296.

This sequence belongs to the ThiI family.

It is found in the cytoplasm. The catalysed reaction is [ThiI sulfur-carrier protein]-S-sulfanyl-L-cysteine + a uridine in tRNA + 2 reduced [2Fe-2S]-[ferredoxin] + ATP + H(+) = [ThiI sulfur-carrier protein]-L-cysteine + a 4-thiouridine in tRNA + 2 oxidized [2Fe-2S]-[ferredoxin] + AMP + diphosphate. The enzyme catalyses [ThiS sulfur-carrier protein]-C-terminal Gly-Gly-AMP + S-sulfanyl-L-cysteinyl-[cysteine desulfurase] + AH2 = [ThiS sulfur-carrier protein]-C-terminal-Gly-aminoethanethioate + L-cysteinyl-[cysteine desulfurase] + A + AMP + 2 H(+). Its pathway is cofactor biosynthesis; thiamine diphosphate biosynthesis. Functionally, catalyzes the ATP-dependent transfer of a sulfur to tRNA to produce 4-thiouridine in position 8 of tRNAs, which functions as a near-UV photosensor. Also catalyzes the transfer of sulfur to the sulfur carrier protein ThiS, forming ThiS-thiocarboxylate. This is a step in the synthesis of thiazole, in the thiamine biosynthesis pathway. The sulfur is donated as persulfide by IscS. This chain is Probable tRNA sulfurtransferase, found in Geobacillus sp. (strain WCH70).